The following is a 294-amino-acid chain: MINGIINLKKEAGMTSHDAVFKLRKLLQEKKIGHGGTLDPDVVGVLPIAVGKATRMIEYMTEAGKVYEGQVTLGYSTTTEDASGEVVARSSLPAVLTEELVDQTMTTFLGKITQTPPMYSAVKVNGRKLYEYARAGESVERPRREVTISLFERTSPLNFTEDGLCRFSFKVACSKGTYVRTLAVDLGRALGVESHMSFLQRSASAGLTLETAYTLGEIADMVSKQEMSFLLPIEYGVADLPKMVIDDTELTEISFGRRLSLPSQEPLLAAFHGEKVIAILEKRDQEYKPKKVLI.

Catalysis depends on Asp-39, which acts as the Nucleophile.

This sequence belongs to the pseudouridine synthase TruB family. Type 1 subfamily.

It catalyses the reaction uridine(55) in tRNA = pseudouridine(55) in tRNA. Functionally, responsible for synthesis of pseudouridine from uracil-55 in the psi GC loop of transfer RNAs. This Streptococcus pyogenes serotype M5 (strain Manfredo) protein is tRNA pseudouridine synthase B.